The primary structure comprises 313 residues: 2,3-dihydroxyphenylpropionate/2,3-dihydroxicinnamic acid 1,2-dioxygenase (313 aa).

His-115 functions as the Proton donor in the catalytic mechanism. The active-site Proton acceptor is the His-179.

It belongs to the LigB/MhpB extradiol dioxygenase family. As to quaternary structure, homotetramer. Requires Fe(2+) as cofactor.

The enzyme catalyses 3-(2,3-dihydroxyphenyl)propanoate + O2 = (2Z,4E)-2-hydroxy-6-oxonona-2,4-dienedioate + H(+). It catalyses the reaction (2E)-3-(2,3-dihydroxyphenyl)prop-2-enoate + O2 = (2Z,4E,7E)-2-hydroxy-6-oxonona-2,4,7-trienedioate + H(+). It participates in aromatic compound metabolism; 3-phenylpropanoate degradation. Functionally, catalyzes the non-heme iron(II)-dependent oxidative cleavage of 2,3-dihydroxyphenylpropionic acid and 2,3-dihydroxicinnamic acid into 2-hydroxy-6-ketononadienedioate and 2-hydroxy-6-ketononatrienedioate, respectively. In Xanthobacter autotrophicus (strain ATCC BAA-1158 / Py2), this protein is 2,3-dihydroxyphenylpropionate/2,3-dihydroxicinnamic acid 1,2-dioxygenase.